The following is a 744-amino-acid chain: Adenosylcobalamin-dependent ribonucleoside-triphosphate reductase (744 aa).

A disulfide bond links cysteine 120 and cysteine 424. The segment at 148 to 159 (SMPFSFLFDQLM) is effector region-1. Positions 169 to 318 (VDENINQIPK…ICNLIGKTVV (150 aa)) are effector region-2. Residues cysteine 413 and glutamate 415 contribute to the active site. The tract at residues 570–631 (FHYSGYLIQR…SDNFASAGTV (62 aa)) is adenosylcobalamin-binding-1. Residues 690–729 (LKQAPKEPISKEKYEKADNHITGNVEIVFEQTNEDQKGLE) are adenosylcobalamin-binding-2.

Belongs to the class II ribonucleoside-triphosphate reductase family. In terms of assembly, monomer. It depends on adenosylcob(III)alamin as a cofactor.

It catalyses the reaction a 2'-deoxyribonucleoside 5'-triphosphate + [thioredoxin]-disulfide + H2O = a ribonucleoside 5'-triphosphate + [thioredoxin]-dithiol. Its activity is regulated as follows. Allosterically regulated by ATP and dNTP. The chain is Adenosylcobalamin-dependent ribonucleoside-triphosphate reductase (rtpR) from Lactobacillus gasseri (strain ATCC 33323 / DSM 20243 / BCRC 14619 / CIP 102991 / JCM 1131 / KCTC 3163 / NCIMB 11718 / NCTC 13722 / AM63).